A 748-amino-acid polypeptide reads, in one-letter code: Catalase-peroxidase (748 aa).

The segment at residues Trp-92–Tyr-238 is a cross-link (tryptophyl-tyrosyl-methioninium (Trp-Tyr) (with M-264)). Catalysis depends on His-93, which acts as the Proton acceptor. The segment at residues Tyr-238 to Met-264 is a cross-link (tryptophyl-tyrosyl-methioninium (Tyr-Met) (with W-92)). His-279 contacts heme b.

The protein belongs to the peroxidase family. Peroxidase/catalase subfamily. In terms of assembly, homodimer or homotetramer. It depends on heme b as a cofactor. In terms of processing, formation of the three residue Trp-Tyr-Met cross-link is important for the catalase, but not the peroxidase activity of the enzyme.

The catalysed reaction is H2O2 + AH2 = A + 2 H2O. It catalyses the reaction 2 H2O2 = O2 + 2 H2O. Functionally, bifunctional enzyme with both catalase and broad-spectrum peroxidase activity. This chain is Catalase-peroxidase, found in Xanthomonas axonopodis pv. citri (strain 306).